Here is a 640-residue protein sequence, read N- to C-terminus: Sodium-dependent nutrient amino acid transporter 1 (640 aa).

Over residues 1 to 13 (MELKPNGNHNNNN) the composition is skewed to low complexity. Residues 1 to 25 (MELKPNGNHNNNNAAEKSEDTEKAK) form a disordered region. At 1–30 (MELKPNGNHNNNNAAEKSEDTEKAKAERTN) the chain is on the cytoplasmic side. The span at 16–25 (EKSEDTEKAK) shows a compositional bias: basic and acidic residues. 3 helical membrane-spanning segments follow: residues 31–51 (WGNG…LGNV), 64–84 (GAFL…MYYL), and 117–137 (TICI…YLFV). N174, N181, and N197 each carry an N-linked (GlcNAc...) asparagine glycan. 9 helical membrane-spanning segments follow: residues 228 to 248 (PDWK…LVIM), 257 to 277 (AAYF…IRAV), 306 to 326 (AVVQ…MFAS), 340 to 360 (IVTT…FAIL), 400 to 420 (LFSV…IVAL), 447 to 467 (CGFL…LTLV), 473 to 493 (TYVV…IYGL), 515 to 535 (CWSF…MVTI), and 551 to 571 (VAGW…GLWY).

Belongs to the sodium:neurotransmitter symporter (SNF) (TC 2.A.22) family.

Its subcellular location is the membrane. Its function is as follows. Unusual broad substrate spectrum amino acid:sodium cotransporter that promotes absorption of the D isomers of essential amino acids. Neutral amino acids are the preferred substrates, especially methionine and phenylalanine. The sequence is that of Sodium-dependent nutrient amino acid transporter 1 from Drosophila ananassae (Fruit fly).